The following is a 112-amino-acid chain: Small ribosomal subunit protein eS24 (112 aa).

A disordered region spans residues 88–112 (RGMAGEEEGNADAQDAPSGDAAEAS).

Belongs to the eukaryotic ribosomal protein eS24 family.

In Methanospirillum hungatei JF-1 (strain ATCC 27890 / DSM 864 / NBRC 100397 / JF-1), this protein is Small ribosomal subunit protein eS24.